The primary structure comprises 338 residues: Protein FosB (338 aa).

Disordered regions lie at residues 1 to 54 (MFQA…PGSF) and 80 to 179 (AQSQ…RREL). Over residues 13 to 31 (SRCSSSPSAESQYLSSVDS) the composition is skewed to polar residues. Ser-27 carries the post-translational modification Phosphoserine. Positions 123–137 (PSTSTSTSGPVSARP) are enriched in low complexity. The 64-residue stretch at 155–218 (EEKRRVRRER…ERLEFVLVAH (64 aa)) folds into the bZIP domain. The basic motif stretch occupies residues 157 to 182 (KRRVRRERNKLAAAKCRNRRRELTDR). Residues 183–211 (LQAETDQLEEEKAELESEIAELQKEKERL) are leucine-zipper. Disordered stretches follow at residues 222–276 (CKIP…PPNL) and 315–338 (AGSQ…LLAL). Residues 256 to 265 (LPPPPPPPLP) show a composition bias toward pro residues. Positions 266–276 (FQSSRDAPPNL) are enriched in polar residues.

The protein belongs to the bZIP family. Fos subfamily. Heterodimer; binds to DNA as heterodimer. Component of an AP-1 transcription factor complex; composed of FOS-JUN heterodimers. As part of the AP-1 transcription factor complex, forms heterodimers with JUN, JUNB or JUND, thereby binding to the AP-1 consensus sequence and stimulating transcription. Phosphorylated; phosphorylation is induced by chronic electroconvulsive seizure (ECS) treatment. As to expression, expressed in brain. Expressed in pyramidal cells in CA1 and CA3, in the dentate gyrus and the nucleus accumbens (at protein level).

It localises to the nucleus. Heterodimerizes with proteins of the JUN family to form an AP-1 transcription factor complex, thereby enhancing their DNA binding activity to an AP-1 consensus sequence 5'-TGA[GC]TCA-3' and enhancing their transcriptional activity. Exhibits transactivation activity in vitro. As part of the AP-1 complex, facilitates enhancer selection together with cell-type-specific transcription factors by collaboratively binding to nucleosomal enhancers and recruiting the SWI/SNF (BAF) chromatin remodeling complex to establish accessible chromatin. Together with JUN, plays a role in activation-induced cell death of T cells by binding to the AP-1 promoter site of FASLG/CD95L, and inducing its transcription in response to activation of the TCR/CD3 signaling pathway. Involved in the display of nurturing behavior towards newborns. May play a role in neurogenesis in the hippocampus and in learning and memory-related tasks by regulating the expression of various genes involved in neurogenesis, depression and epilepsy. Implicated in behavioral responses related to morphine reward and spatial memory. In Rattus norvegicus (Rat), this protein is Protein FosB.